Consider the following 422-residue polypeptide: Enolase (422 aa).

Glutamine 161 contributes to the (2R)-2-phosphoglycerate binding site. Glutamate 203 serves as the catalytic Proton donor. 3 residues coordinate Mg(2+): aspartate 240, glutamate 283, and aspartate 310. Residues lysine 335, arginine 364, serine 365, and lysine 386 each coordinate (2R)-2-phosphoglycerate. The active-site Proton acceptor is the lysine 335.

It belongs to the enolase family. Requires Mg(2+) as cofactor.

Its subcellular location is the cytoplasm. It is found in the secreted. It localises to the cell surface. It carries out the reaction (2R)-2-phosphoglycerate = phosphoenolpyruvate + H2O. Its pathway is carbohydrate degradation; glycolysis; pyruvate from D-glyceraldehyde 3-phosphate: step 4/5. Functionally, catalyzes the reversible conversion of 2-phosphoglycerate (2-PG) into phosphoenolpyruvate (PEP). It is essential for the degradation of carbohydrates via glycolysis. In Deinococcus geothermalis (strain DSM 11300 / CIP 105573 / AG-3a), this protein is Enolase.